The primary structure comprises 224 residues: ATP phosphoribosyltransferase (224 aa).

The protein belongs to the ATP phosphoribosyltransferase family. Short subfamily. As to quaternary structure, heteromultimer composed of HisG and HisZ subunits.

It localises to the cytoplasm. The catalysed reaction is 1-(5-phospho-beta-D-ribosyl)-ATP + diphosphate = 5-phospho-alpha-D-ribose 1-diphosphate + ATP. It participates in amino-acid biosynthesis; L-histidine biosynthesis; L-histidine from 5-phospho-alpha-D-ribose 1-diphosphate: step 1/9. Functionally, catalyzes the condensation of ATP and 5-phosphoribose 1-diphosphate to form N'-(5'-phosphoribosyl)-ATP (PR-ATP). Has a crucial role in the pathway because the rate of histidine biosynthesis seems to be controlled primarily by regulation of HisG enzymatic activity. The chain is ATP phosphoribosyltransferase from Cupriavidus taiwanensis (strain DSM 17343 / BCRC 17206 / CCUG 44338 / CIP 107171 / LMG 19424 / R1) (Ralstonia taiwanensis (strain LMG 19424)).